The chain runs to 141 residues: Putative nickel-responsive regulator (141 aa).

The Ni(2+) site is built by His80, His91, His93, and Cys99.

Belongs to the transcriptional regulatory CopG/NikR family. As to quaternary structure, homotetramer. Ni(2+) is required as a cofactor.

Functionally, transcriptional regulator. This is Putative nickel-responsive regulator from Methanocaldococcus jannaschii (strain ATCC 43067 / DSM 2661 / JAL-1 / JCM 10045 / NBRC 100440) (Methanococcus jannaschii).